The chain runs to 219 residues: uncharacterized protein (219 aa).

The next 5 membrane-spanning stretches (helical) occupy residues 14 to 34, 37 to 57, 123 to 143, 155 to 175, and 189 to 209; these read LVYS…FGVL, TLGF…AGAS, FLLG…ALGV, VYSA…LPNL, and VALA…AALA.

It belongs to the AzlC family.

It is found in the cell membrane. This is an uncharacterized protein from Archaeoglobus fulgidus (strain ATCC 49558 / DSM 4304 / JCM 9628 / NBRC 100126 / VC-16).